Consider the following 179-residue polypeptide: Peptide methionine sulfoxide reductase MsrA (179 aa).

The active site involves cysteine 14.

Belongs to the MsrA Met sulfoxide reductase family.

It carries out the reaction L-methionyl-[protein] + [thioredoxin]-disulfide + H2O = L-methionyl-(S)-S-oxide-[protein] + [thioredoxin]-dithiol. The catalysed reaction is [thioredoxin]-disulfide + L-methionine + H2O = L-methionine (S)-S-oxide + [thioredoxin]-dithiol. Functionally, has an important function as a repair enzyme for proteins that have been inactivated by oxidation. Catalyzes the reversible oxidation-reduction of methionine sulfoxide in proteins to methionine. The chain is Peptide methionine sulfoxide reductase MsrA from Nitrobacter winogradskyi (strain ATCC 25391 / DSM 10237 / CIP 104748 / NCIMB 11846 / Nb-255).